Consider the following 633-residue polypeptide: Chaperone protein HtpG (633 aa).

The a; substrate-binding stretch occupies residues 1 to 341; sequence MTAPHETMSF…SADLPLNVSR (341 aa). Residues 342–562 are b; it reads ELLQESRDVK…EGDMSGYLQR (221 aa). Positions 563–633 are c; that stretch reads LLKQAGQKAP…YVQRVNKLLA (71 aa).

This sequence belongs to the heat shock protein 90 family. In terms of assembly, homodimer.

Its subcellular location is the cytoplasm. Functionally, molecular chaperone. Has ATPase activity. This is Chaperone protein HtpG from Cupriavidus taiwanensis (strain DSM 17343 / BCRC 17206 / CCUG 44338 / CIP 107171 / LMG 19424 / R1) (Ralstonia taiwanensis (strain LMG 19424)).